We begin with the raw amino-acid sequence, 267 residues long: tRNA pseudouridine synthase A (267 aa).

Catalysis depends on Asp-51, which acts as the Nucleophile. Tyr-109 contacts substrate.

Belongs to the tRNA pseudouridine synthase TruA family. In terms of assembly, homodimer.

It catalyses the reaction uridine(38/39/40) in tRNA = pseudouridine(38/39/40) in tRNA. In terms of biological role, formation of pseudouridine at positions 38, 39 and 40 in the anticodon stem and loop of transfer RNAs. This chain is tRNA pseudouridine synthase A, found in Staphylococcus saprophyticus subsp. saprophyticus (strain ATCC 15305 / DSM 20229 / NCIMB 8711 / NCTC 7292 / S-41).